Consider the following 202-residue polypeptide: MTAIAIHPESLRDVVASALGDRVRQISVALDEVTVVVSAARYLEAMQILRDAPDCKFEQLIDLCGVDYSAYGATGSEGPRYAVVSHLLSVSLNQRLRVKVFCSDDDFPIVASVTDIWNSANWFEREAFDLFGIVFDGHNDLRRILTDYGFIGHPFRKDFPLSGHVEMRYDADQRRVIYEPVTIEPREVTPRVIREDKYGGLH.

It belongs to the complex I 30 kDa subunit family. As to quaternary structure, NDH-1 is composed of 14 different subunits. Subunits NuoB, C, D, E, F, and G constitute the peripheral sector of the complex.

It localises to the cell inner membrane. It catalyses the reaction a quinone + NADH + 5 H(+)(in) = a quinol + NAD(+) + 4 H(+)(out). Its function is as follows. NDH-1 shuttles electrons from NADH, via FMN and iron-sulfur (Fe-S) centers, to quinones in the respiratory chain. The immediate electron acceptor for the enzyme in this species is believed to be ubiquinone. Couples the redox reaction to proton translocation (for every two electrons transferred, four hydrogen ions are translocated across the cytoplasmic membrane), and thus conserves the redox energy in a proton gradient. This Acidovorax sp. (strain JS42) protein is NADH-quinone oxidoreductase subunit C.